Here is a 152-residue protein sequence, read N- to C-terminus: Deoxyuridine 5'-triphosphate nucleotidohydrolase (152 aa).

Substrate contacts are provided by residues 72-74, asparagine 85, and 89-91; these read RSG and TVD.

It belongs to the dUTPase family. It depends on Mg(2+) as a cofactor.

The enzyme catalyses dUTP + H2O = dUMP + diphosphate + H(+). Its pathway is pyrimidine metabolism; dUMP biosynthesis; dUMP from dCTP (dUTP route): step 2/2. Functionally, this enzyme is involved in nucleotide metabolism: it produces dUMP, the immediate precursor of thymidine nucleotides and it decreases the intracellular concentration of dUTP so that uracil cannot be incorporated into DNA. This is Deoxyuridine 5'-triphosphate nucleotidohydrolase from Nitrobacter winogradskyi (strain ATCC 25391 / DSM 10237 / CIP 104748 / NCIMB 11846 / Nb-255).